A 313-amino-acid chain; its full sequence is Ribosomal RNA small subunit methyltransferase H (313 aa).

S-adenosyl-L-methionine is bound by residues 35-37 (GGH), Asp-55, Phe-80, Asp-102, and Gln-109.

It belongs to the methyltransferase superfamily. RsmH family.

The protein resides in the cytoplasm. The catalysed reaction is cytidine(1402) in 16S rRNA + S-adenosyl-L-methionine = N(4)-methylcytidine(1402) in 16S rRNA + S-adenosyl-L-homocysteine + H(+). In terms of biological role, specifically methylates the N4 position of cytidine in position 1402 (C1402) of 16S rRNA. The protein is Ribosomal RNA small subunit methyltransferase H of Shewanella amazonensis (strain ATCC BAA-1098 / SB2B).